The primary structure comprises 245 residues: 1-(5-phosphoribosyl)-5-[(5-phosphoribosylamino)methylideneamino] imidazole-4-carboxamide isomerase (245 aa).

Asp-11 serves as the catalytic Proton acceptor. The Proton donor role is filled by Asp-132.

Belongs to the HisA/HisF family.

It localises to the cytoplasm. It carries out the reaction 1-(5-phospho-beta-D-ribosyl)-5-[(5-phospho-beta-D-ribosylamino)methylideneamino]imidazole-4-carboxamide = 5-[(5-phospho-1-deoxy-D-ribulos-1-ylimino)methylamino]-1-(5-phospho-beta-D-ribosyl)imidazole-4-carboxamide. Its pathway is amino-acid biosynthesis; L-histidine biosynthesis; L-histidine from 5-phospho-alpha-D-ribose 1-diphosphate: step 4/9. This Xanthobacter autotrophicus (strain ATCC BAA-1158 / Py2) protein is 1-(5-phosphoribosyl)-5-[(5-phosphoribosylamino)methylideneamino] imidazole-4-carboxamide isomerase.